Consider the following 399-residue polypeptide: Succinate--CoA ligase [ADP-forming] subunit beta (399 aa).

The 246-residue stretch at 9–254 folds into the ATP-grasp domain; sequence KELLAKYGIG…ETEEDPAEVE (246 aa). ATP is bound by residues Lys-46, 53-55, Val-112, and Glu-117; that span reads GRG. Asn-209 and Asp-223 together coordinate Mg(2+). Substrate is bound by residues Asn-274 and 331-333; that span reads GIM.

The protein belongs to the succinate/malate CoA ligase beta subunit family. As to quaternary structure, heterotetramer of two alpha and two beta subunits. Requires Mg(2+) as cofactor.

It catalyses the reaction succinate + ATP + CoA = succinyl-CoA + ADP + phosphate. The catalysed reaction is GTP + succinate + CoA = succinyl-CoA + GDP + phosphate. The protein operates within carbohydrate metabolism; tricarboxylic acid cycle; succinate from succinyl-CoA (ligase route): step 1/1. Succinyl-CoA synthetase functions in the citric acid cycle (TCA), coupling the hydrolysis of succinyl-CoA to the synthesis of either ATP or GTP and thus represents the only step of substrate-level phosphorylation in the TCA. The beta subunit provides nucleotide specificity of the enzyme and binds the substrate succinate, while the binding sites for coenzyme A and phosphate are found in the alpha subunit. The polypeptide is Succinate--CoA ligase [ADP-forming] subunit beta (Erythrobacter litoralis (strain HTCC2594)).